The sequence spans 646 residues: Tyrosine-protein kinase MasK (646 aa).

Residues 1 to 415 are Periplasmic-facing; the sequence is MSPPQTTLPV…PTAGGRRWRT (415 aa). Residues 25–300 enclose the Protein kinase domain; that stretch reads YVLVRKLAEG…AFADALETFL (276 aa). ATP is bound by residues 31–39 and lysine 57; that span reads LAEGGMAEI. Aspartate 163 (proton acceptor) is an active-site residue. Residues 373-410 form a disordered region; that stretch reads TSAQRPGMSMRPSSPGVPAHGAASRGSTSPESAPTAGG. The chain crosses the membrane as a helical span at residues 416-433; that stretch reads LAVGLAGGLMLAAAGIVG. Residues 434 to 646 are Cytoplasmic-facing; the sequence is YRQWMTTPAS…VMPFSWRVTQ (213 aa). The segment at 521-547 is disordered; sequence AGAASDVEAEADEEGADAAPVRSKKAS. Residues 527–536 show a composition bias toward acidic residues; the sequence is VEAEADEEGA.

This sequence belongs to the protein kinase superfamily. Tyr protein kinase family. Interacts with MglA. Autophosphorylated.

The protein resides in the cell inner membrane. It carries out the reaction L-tyrosyl-[protein] + ATP = O-phospho-L-tyrosyl-[protein] + ADP + H(+). In terms of biological role, essential for growth. Interacts with MglA to control social gliding motility. The sequence is that of Tyrosine-protein kinase MasK (masK) from Myxococcus xanthus (strain DK1622).